The sequence spans 145 residues: METIMVINGPNLNRLGKREPDIYGRETLSDLHERLIKFAEARGYKADCRQSNHEGDIIDWIHEAEGRSSGVILNPGAFTHYSYAIRDAIASISVPVIEVHLSNVHARESFRHTSVTAPVTKGQIVGLGVIGYELAMLALLEGEKK.

Y23 (proton acceptor) is an active-site residue. Residues N74, H80, and D87 each coordinate substrate. H100 functions as the Proton donor in the catalytic mechanism. Substrate is bound by residues 101–102 (LS) and R111.

The protein belongs to the type-II 3-dehydroquinase family. As to quaternary structure, homododecamer.

The enzyme catalyses 3-dehydroquinate = 3-dehydroshikimate + H2O. Its pathway is metabolic intermediate biosynthesis; chorismate biosynthesis; chorismate from D-erythrose 4-phosphate and phosphoenolpyruvate: step 3/7. Functionally, catalyzes a trans-dehydration via an enolate intermediate. The polypeptide is 3-dehydroquinate dehydratase (Halalkalibacterium halodurans (strain ATCC BAA-125 / DSM 18197 / FERM 7344 / JCM 9153 / C-125) (Bacillus halodurans)).